The chain runs to 135 residues: MAKLFTLCWKYLRAIVLIYLCLFAGNAIAALLPIAIPGSIIGMLLLFALLSTQIMPARWVKPGCHLLIRYMVLLFVPIGVGVMKYYDQILDHLGPLVVSCIISTLMVLVVVGYTSHYFHRERRIVGKPDAAEGEK.

A run of 4 helical transmembrane segments spans residues 4 to 24 (LFTL…CLFA), 30 to 50 (ALLP…FALL), 63 to 83 (GCHL…VGVM), and 93 to 113 (LGPL…VVGY).

It belongs to the UPF0299 family.

Its subcellular location is the cell inner membrane. The polypeptide is UPF0299 membrane protein Spro_1570 (Serratia proteamaculans (strain 568)).